A 415-amino-acid polypeptide reads, in one-letter code: uncharacterized protein (415 aa).

Histidine 88 provides a ligand contact to Zn(2+). Residue aspartate 90 is part of the active site. A Zn(2+)-binding site is contributed by aspartate 121. Residue glutamate 155 is the Proton acceptor of the active site. 3 residues coordinate Zn(2+): glutamate 156, aspartate 185, and histidine 392.

This sequence belongs to the peptidase M20A family. Requires Zn(2+) as cofactor. It depends on Co(2+) as a cofactor.

This is an uncharacterized protein from Methanococcus maripaludis (strain DSM 14266 / JCM 13030 / NBRC 101832 / S2 / LL).